The following is a 231-amino-acid chain: Large ribosomal subunit protein uL1 (231 aa).

This sequence belongs to the universal ribosomal protein uL1 family. In terms of assembly, part of the 50S ribosomal subunit.

Binds directly to 23S rRNA. The L1 stalk is quite mobile in the ribosome, and is involved in E site tRNA release. Functionally, protein L1 is also a translational repressor protein, it controls the translation of the L11 operon by binding to its mRNA. The polypeptide is Large ribosomal subunit protein uL1 (Legionella pneumophila (strain Paris)).